Here is a 314-residue protein sequence, read N- to C-terminus: MMGQNQTSISDFLLLGLPIQPEQQNLCYALFLAMYLTTLLGNLLIIVLIRLDSHLHTPMYLFLSNLSFSDLCFSSVTIPKLLQNMQNQDPSIPYADCLTQMYFFLLFGDLESFLLVAMAYDRYVAICFALHYTAIMSPMLCLSLVALSWVLTTFHAMLHTLLMARLCFCADNVIPHFFCDMSALLKLACSDTRVNEWVIFIMGGLIVVIPFLLILGSYARIVSSILKVPSSKGICKAFSTCGSHLSVVSLFYGTVIGLYLCPSANSSTLKETVMAMMYTVVTPMLNPFIYSLRNGDMKGALSRVIHQKKTFFSL.

Over 1–25 (MMGQNQTSISDFLLLGLPIQPEQQN) the chain is Extracellular. N-linked (GlcNAc...) asparagine glycosylation occurs at N5. A helical membrane pass occupies residues 26-49 (LCYALFLAMYLTTLLGNLLIIVLI). Residues 50–57 (RLDSHLHT) lie on the Cytoplasmic side of the membrane. A helical membrane pass occupies residues 58–79 (PMYLFLSNLSFSDLCFSSVTIP). Residues 80–100 (KLLQNMQNQDPSIPYADCLTQ) are Extracellular-facing. A disulfide bridge links C97 with C189. The helical transmembrane segment at 101 to 120 (MYFFLLFGDLESFLLVAMAY) threads the bilayer. Residues 121–139 (DRYVAICFALHYTAIMSPM) are Cytoplasmic-facing. The helical transmembrane segment at 140–158 (LCLSLVALSWVLTTFHAML) threads the bilayer. Residues 159-195 (HTLLMARLCFCADNVIPHFFCDMSALLKLACSDTRVN) lie on the Extracellular side of the membrane. Residues 196–219 (EWVIFIMGGLIVVIPFLLILGSYA) form a helical membrane-spanning segment. The Cytoplasmic portion of the chain corresponds to 220-236 (RIVSSILKVPSSKGICK). The helical transmembrane segment at 237 to 259 (AFSTCGSHLSVVSLFYGTVIGLY) threads the bilayer. At 260–272 (LCPSANSSTLKET) the chain is on the extracellular side. The chain crosses the membrane as a helical span at residues 273–292 (VMAMMYTVVTPMLNPFIYSL). Over 293 to 314 (RNGDMKGALSRVIHQKKTFFSL) the chain is Cytoplasmic.

Belongs to the G-protein coupled receptor 1 family.

Its subcellular location is the cell membrane. Functionally, odorant receptor. In Gorilla gorilla gorilla (Western lowland gorilla), this protein is Olfactory receptor 1E1 (OR1E1).